The chain runs to 532 residues: Probable 1,4-beta-D-glucan cellobiohydrolase B (532 aa).

The N-terminal stretch at M1–A26 is a signal peptide. The interval Q27 to S461 is catalytic. Catalysis depends on E238, which acts as the Nucleophile. The active-site Proton donor is E243. N-linked (GlcNAc...) asparagine glycosylation is present at N296. Positions T462 to T495 are disordered. Residues T462–G496 form a thr-rich linker region. Low complexity predominate over residues T475–G490. The region spanning G496–L532 is the CBM1 domain. Intrachain disulfides connect C504-C521 and C515-C531.

Belongs to the glycosyl hydrolase 7 (cellulase C) family.

The protein localises to the secreted. It catalyses the reaction Hydrolysis of (1-&gt;4)-beta-D-glucosidic linkages in cellulose and cellotetraose, releasing cellobiose from the non-reducing ends of the chains.. Its function is as follows. The biological conversion of cellulose to glucose generally requires three types of hydrolytic enzymes: (1) Endoglucanases which cut internal beta-1,4-glucosidic bonds; (2) Exocellobiohydrolases that cut the disaccharide cellobiose from the non-reducing end of the cellulose polymer chain; (3) Beta-1,4-glucosidases which hydrolyze the cellobiose and other short cello-oligosaccharides to glucose. The sequence is that of Probable 1,4-beta-D-glucan cellobiohydrolase B (cbhB) from Aspergillus fumigatus (strain CBS 144.89 / FGSC A1163 / CEA10) (Neosartorya fumigata).